We begin with the raw amino-acid sequence, 384 residues long: Galactokinase (384 aa).

34 to 37 (EHTD) contacts substrate. Position 123-129 (123-129 (SSGLSSS)) interacts with ATP. Residues Ser-129 and Glu-161 each coordinate Mg(2+). The active-site Proton acceptor is Asp-173. A substrate-binding site is contributed by Tyr-222.

This sequence belongs to the GHMP kinase family. GalK subfamily.

It localises to the cytoplasm. The enzyme catalyses alpha-D-galactose + ATP = alpha-D-galactose 1-phosphate + ADP + H(+). It participates in carbohydrate metabolism; galactose metabolism. In terms of biological role, catalyzes the transfer of the gamma-phosphate of ATP to D-galactose to form alpha-D-galactose-1-phosphate (Gal-1-P). The sequence is that of Galactokinase from Actinobacillus pleuropneumoniae serotype 5b (strain L20).